A 114-amino-acid chain; its full sequence is Putative antiporter subunit mnhC2 (114 aa).

The next 3 helical transmembrane spans lie at 3 to 23 (LILL…ILSI), 28 to 48 (IVIG…SMGT), and 72 to 92 (AIVL…LVLV).

The protein belongs to the CPA3 antiporters (TC 2.A.63) subunit C family. As to quaternary structure, may form a heterooligomeric complex that consists of seven subunits: mnhA2, mnhB2, mnhC2, mnhD2, mnhE2, mnhF2 and mnhG2.

It localises to the cell membrane. This Staphylococcus aureus (strain MRSA252) protein is Putative antiporter subunit mnhC2 (mnhC2).